A 223-amino-acid polypeptide reads, in one-letter code: Transcriptional regulatory protein HprR (223 aa).

The 114-residue stretch at 2–115 (KILLIEDNQR…ELLARVRAQL (114 aa)) folds into the Response regulatory domain. Asp-51 is subject to 4-aspartylphosphate. The segment at residues 122 to 220 (NSTLEISGLR…IRGMGYSFVA (99 aa)) is a DNA-binding region (ompR/PhoB-type).

Post-translationally, phosphorylated by HprS.

It localises to the cytoplasm. Member of a two-component regulatory system HprR/HprS involved in response to hydrogen peroxide. Regulates the expression of at least 5 operons, cyoABCDE, hprRS, hiuH, cusRS and cusCFBA. Bifunctional regulator that acts as an activator and a repressor. In Escherichia coli (strain K12), this protein is Transcriptional regulatory protein HprR.